We begin with the raw amino-acid sequence, 219 residues long: Ribose-5-phosphate isomerase A (219 aa).

Substrate-binding positions include 28–31, 81–84, and 94–97; these read SGST, DGAD, and KGGG. Glu-103 acts as the Proton acceptor in catalysis. Lys-121 lines the substrate pocket.

This sequence belongs to the ribose 5-phosphate isomerase family. As to quaternary structure, homodimer.

It catalyses the reaction aldehydo-D-ribose 5-phosphate = D-ribulose 5-phosphate. Its pathway is carbohydrate degradation; pentose phosphate pathway; D-ribose 5-phosphate from D-ribulose 5-phosphate (non-oxidative stage): step 1/1. Its function is as follows. Catalyzes the reversible conversion of ribose-5-phosphate to ribulose 5-phosphate. The protein is Ribose-5-phosphate isomerase A of Actinobacillus pleuropneumoniae serotype 3 (strain JL03).